A 408-amino-acid chain; its full sequence is CCA-adding enzyme (408 aa).

2 residues coordinate ATP: G8 and R11. CTP contacts are provided by G8 and R11. Mg(2+)-binding residues include E21 and D23. R91, R137, and R140 together coordinate ATP. The CTP site is built by R91, R137, and R140. One can recognise an HD domain in the interval 226–329; the sequence is TGYYTMTTLS…MTLFHVFDCW (104 aa).

The protein belongs to the tRNA nucleotidyltransferase/poly(A) polymerase family. Bacterial CCA-adding enzyme type 2 subfamily. Mg(2+) is required as a cofactor.

It catalyses the reaction a tRNA precursor + 2 CTP + ATP = a tRNA with a 3' CCA end + 3 diphosphate. The catalysed reaction is a tRNA with a 3' CCA end + 2 CTP + ATP = a tRNA with a 3' CCACCA end + 3 diphosphate. Catalyzes the addition and repair of the essential 3'-terminal CCA sequence in tRNAs without using a nucleic acid template. Adds these three nucleotides in the order of C, C, and A to the tRNA nucleotide-73, using CTP and ATP as substrates and producing inorganic pyrophosphate. tRNA 3'-terminal CCA addition is required both for tRNA processing and repair. Also involved in tRNA surveillance by mediating tandem CCA addition to generate a CCACCA at the 3' terminus of unstable tRNAs. While stable tRNAs receive only 3'-terminal CCA, unstable tRNAs are marked with CCACCA and rapidly degraded. This is CCA-adding enzyme from Blochmanniella pennsylvanica (strain BPEN).